The chain runs to 603 residues: O-acetyltransferase OatA (603 aa).

Transmembrane regions (helical) follow at residues Tyr17–Leu37, Gly45–Ile65, Leu87–Pro107, Leu148–Leu168, Ile177–Phe197, Thr211–Leu231, Ile239–Phe259, Ile268–Val288, Tyr311–Gly331, Ile333–Tyr353, and Val382–Leu402. Residues Ser453, Asp575, and His578 contribute to the active site.

It belongs to the acyltransferase 3 family. As to quaternary structure, monomer.

The protein resides in the cell membrane. Responsible for O-acetylation at the C(6)-hydroxyl group of N-acetylmuramyl residues, forming the corresponding N,6-O-diacetylmuramic acid of the peptidoglycan. O-acetylation of the peptidoglycan is the major determinant for lysozyme resistance. This chain is O-acetyltransferase OatA, found in Staphylococcus aureus (strain NCTC 8325 / PS 47).